The sequence spans 149 residues: Golgi apparatus membrane protein tvp-18 (149 aa).

N11 carries an N-linked (GlcNAc...) asparagine glycan. A run of 4 helical transmembrane segments spans residues 18–38, 41–61, 84–103, and 108–128; these read WLGI…IFTF, IIIV…FVEV, NYTR…LSCI, and SLLV…LAAL.

The protein belongs to the TVP18 family.

It is found in the golgi apparatus membrane. Its function is as follows. Golgi membrane protein involved in vesicular trafficking. The protein is Golgi apparatus membrane protein tvp-18 (tvp-18) of Neurospora crassa (strain ATCC 24698 / 74-OR23-1A / CBS 708.71 / DSM 1257 / FGSC 987).